The primary structure comprises 155 residues: SsrA-binding protein (155 aa).

The interval 132–155 (DKREDLKQKQMKRDVDRAIKDHMR) is disordered.

The protein belongs to the SmpB family.

Its subcellular location is the cytoplasm. Its function is as follows. Required for rescue of stalled ribosomes mediated by trans-translation. Binds to transfer-messenger RNA (tmRNA), required for stable association of tmRNA with ribosomes. tmRNA and SmpB together mimic tRNA shape, replacing the anticodon stem-loop with SmpB. tmRNA is encoded by the ssrA gene; the 2 termini fold to resemble tRNA(Ala) and it encodes a 'tag peptide', a short internal open reading frame. During trans-translation Ala-aminoacylated tmRNA acts like a tRNA, entering the A-site of stalled ribosomes, displacing the stalled mRNA. The ribosome then switches to translate the ORF on the tmRNA; the nascent peptide is terminated with the 'tag peptide' encoded by the tmRNA and targeted for degradation. The ribosome is freed to recommence translation, which seems to be the essential function of trans-translation. This Oceanobacillus iheyensis (strain DSM 14371 / CIP 107618 / JCM 11309 / KCTC 3954 / HTE831) protein is SsrA-binding protein.